The sequence spans 436 residues: Ribosomal protein uS12 methylthiotransferase RimO (436 aa).

Positions 4 to 122 (KRIDIITLGC…LLQDLGKTYH (119 aa)) constitute an MTTase N-terminal domain. 6 residues coordinate [4Fe-4S] cluster: cysteine 13, cysteine 51, cysteine 85, cysteine 146, cysteine 150, and cysteine 153. The Radical SAM core domain occupies 132–363 (TTPKHYAYLK…MDIQQGISAE (232 aa)). Residues 366-433 (AAKIGQQMKV…DFDLYAKILN (68 aa)) enclose the TRAM domain.

It belongs to the methylthiotransferase family. RimO subfamily. [4Fe-4S] cluster serves as cofactor.

It is found in the cytoplasm. It carries out the reaction L-aspartate(89)-[ribosomal protein uS12]-hydrogen + (sulfur carrier)-SH + AH2 + 2 S-adenosyl-L-methionine = 3-methylsulfanyl-L-aspartate(89)-[ribosomal protein uS12]-hydrogen + (sulfur carrier)-H + 5'-deoxyadenosine + L-methionine + A + S-adenosyl-L-homocysteine + 2 H(+). Catalyzes the methylthiolation of an aspartic acid residue of ribosomal protein uS12. The sequence is that of Ribosomal protein uS12 methylthiotransferase RimO from Bacteroides thetaiotaomicron (strain ATCC 29148 / DSM 2079 / JCM 5827 / CCUG 10774 / NCTC 10582 / VPI-5482 / E50).